The chain runs to 530 residues: Metal transporter Nramp5 (530 aa).

The span at 1-10 shows a compositional bias: polar residues; the sequence is MTGSTVSRQE. The disordered stretch occupies residues 1–53; it reads MTGSTVSRQENSPKRPNDSNGEFKRLLVPETSQPEEDELHESPPENQILNVEE. The segment covering 11–27 has biased composition (basic and acidic residues); the sequence is NSPKRPNDSNGEFKRLL. 12 helical membrane-spanning segments follow: residues 65–85, 98–118, 147–167, 179–199, 207–227, 253–273, 299–319, 341–361, 387–407, 429–449, 458–478, and 485–505; these read FSWA…IAFL, AVAG…GLLM, ILLW…EVIG, FLPI…ISYL, LEGL…WMFN, AVGV…SALV, AALF…AKGF, YGGG…AAGQ, LSAF…AIMF, IPFA…MGVF, LAWT…LDFF, and FLVG…IIYL.

Belongs to the NRAMP (TC 2.A.55) family.

The protein localises to the membrane. Its function is as follows. Seems to be involved in iron uptake. In Arabidopsis thaliana (Mouse-ear cress), this protein is Metal transporter Nramp5 (NRAMP5).